The following is a 1395-amino-acid chain: DNA-directed RNA polymerase subunit beta' (1395 aa).

Residues Cys-70, Cys-72, Cys-85, and Cys-88 each coordinate Zn(2+). Positions 470, 472, and 474 each coordinate Mg(2+). Zn(2+) is bound by residues Cys-815, Cys-889, Cys-896, and Cys-899.

It belongs to the RNA polymerase beta' chain family. The RNAP catalytic core consists of 2 alpha, 1 beta, 1 beta' and 1 omega subunit. When a sigma factor is associated with the core the holoenzyme is formed, which can initiate transcription. Mg(2+) serves as cofactor. Zn(2+) is required as a cofactor.

The enzyme catalyses RNA(n) + a ribonucleoside 5'-triphosphate = RNA(n+1) + diphosphate. In terms of biological role, DNA-dependent RNA polymerase catalyzes the transcription of DNA into RNA using the four ribonucleoside triphosphates as substrates. This is DNA-directed RNA polymerase subunit beta' from Anaeromyxobacter sp. (strain Fw109-5).